An 82-amino-acid chain; its full sequence is Protein C14 (82 aa).

This chain is Protein C14, found in Homo sapiens (Human).